The sequence spans 276 residues: Ribosomal RNA small subunit methyltransferase A (276 aa).

Asn-27, Leu-29, Gly-54, Glu-75, Asp-101, and Asn-122 together coordinate S-adenosyl-L-methionine.

Belongs to the class I-like SAM-binding methyltransferase superfamily. rRNA adenine N(6)-methyltransferase family. RsmA subfamily.

It localises to the cytoplasm. The catalysed reaction is adenosine(1518)/adenosine(1519) in 16S rRNA + 4 S-adenosyl-L-methionine = N(6)-dimethyladenosine(1518)/N(6)-dimethyladenosine(1519) in 16S rRNA + 4 S-adenosyl-L-homocysteine + 4 H(+). Specifically dimethylates two adjacent adenosines (A1518 and A1519) in the loop of a conserved hairpin near the 3'-end of 16S rRNA in the 30S particle. May play a critical role in biogenesis of 30S subunits. This chain is Ribosomal RNA small subunit methyltransferase A, found in Brucella melitensis biotype 1 (strain ATCC 23456 / CCUG 17765 / NCTC 10094 / 16M).